The primary structure comprises 445 residues: Tubulin alpha-1 chain (445 aa).

Gln-11 contacts GTP. Lys-40 is modified (N6-acetyllysine). Positions 71, 140, 144, 145, 179, 206, and 228 each coordinate GTP. Glu-71 contacts Mg(2+). Glu-254 is an active-site residue.

It belongs to the tubulin family. As to quaternary structure, dimer of alpha and beta chains. A typical microtubule is a hollow water-filled tube with an outer diameter of 25 nm and an inner diameter of 15 nM. Alpha-beta heterodimers associate head-to-tail to form protofilaments running lengthwise along the microtubule wall with the beta-tubulin subunit facing the microtubule plus end conferring a structural polarity. Microtubules usually have 13 protofilaments but different protofilament numbers can be found in some organisms and specialized cells. It depends on Mg(2+) as a cofactor. Post-translationally, acetylation of alpha chains at Lys-40 stabilizes microtubules and affects affinity and processivity of microtubule motors. This modification has a role in multiple cellular functions, ranging from cell motility, cell cycle progression or cell differentiation to intracellular trafficking and signaling.

The protein resides in the cytoplasm. It localises to the cytoskeleton. It carries out the reaction GTP + H2O = GDP + phosphate + H(+). In terms of biological role, tubulin is the major constituent of microtubules, a cylinder consisting of laterally associated linear protofilaments composed of alpha- and beta-tubulin heterodimers. Microtubules grow by the addition of GTP-tubulin dimers to the microtubule end, where a stabilizing cap forms. Below the cap, tubulin dimers are in GDP-bound state, owing to GTPase activity of alpha-tubulin. The protein is Tubulin alpha-1 chain of Stylonychia lemnae (Ciliate).